A 207-amino-acid polypeptide reads, in one-letter code: Redox-sensing transcriptional repressor Rex (207 aa).

A DNA-binding region (H-T-H motif) is located at residues 15–54 (LYYRCLNRLYEEGIEYVASKDIAERLGIKSSQVRKDLSYF). 89–94 (GAGNIG) contacts NAD(+).

It belongs to the transcriptional regulatory Rex family. In terms of assembly, homodimer.

The protein resides in the cytoplasm. Its function is as follows. Modulates transcription in response to changes in cellular NADH/NAD(+) redox state. The chain is Redox-sensing transcriptional repressor Rex from Thermosipho africanus (strain TCF52B).